The primary structure comprises 433 residues: Serine hydroxymethyltransferase (433 aa).

(6S)-5,6,7,8-tetrahydrofolate is bound by residues Leu132 and 136–138; that span reads GHL. N6-(pyridoxal phosphate)lysine is present on Lys241.

The protein belongs to the SHMT family. Homodimer. Requires pyridoxal 5'-phosphate as cofactor.

It localises to the cytoplasm. It carries out the reaction (6R)-5,10-methylene-5,6,7,8-tetrahydrofolate + glycine + H2O = (6S)-5,6,7,8-tetrahydrofolate + L-serine. Its pathway is one-carbon metabolism; tetrahydrofolate interconversion. The protein operates within amino-acid biosynthesis; glycine biosynthesis; glycine from L-serine: step 1/1. Functionally, catalyzes the reversible interconversion of serine and glycine with tetrahydrofolate (THF) serving as the one-carbon carrier. This reaction serves as the major source of one-carbon groups required for the biosynthesis of purines, thymidylate, methionine, and other important biomolecules. Also exhibits THF-independent aldolase activity toward beta-hydroxyamino acids, producing glycine and aldehydes, via a retro-aldol mechanism. This chain is Serine hydroxymethyltransferase, found in Methylobacterium sp. (strain 4-46).